Consider the following 31-residue polypeptide: MFTLTSYFGFLLAALTITSALFIGLNKIRLI.

Residues 4–26 (LTSYFGFLLAALTITSALFIGLN) traverse the membrane as a helical segment.

The protein belongs to the PetL family. In terms of assembly, the 4 large subunits of the cytochrome b6-f complex are cytochrome b6, subunit IV (17 kDa polypeptide, PetD), cytochrome f and the Rieske protein, while the 4 small subunits are PetG, PetL, PetM and PetN. The complex functions as a dimer.

It localises to the plastid. The protein resides in the chloroplast thylakoid membrane. Functionally, component of the cytochrome b6-f complex, which mediates electron transfer between photosystem II (PSII) and photosystem I (PSI), cyclic electron flow around PSI, and state transitions. PetL is important for photoautotrophic growth as well as for electron transfer efficiency and stability of the cytochrome b6-f complex. This is Cytochrome b6-f complex subunit 6 from Blitum bonus-henricus (Good King Henry).